The chain runs to 272 residues: Dermonecrotic toxin StSicTox-betaIC1 (272 aa).

Histidine 5 is a catalytic residue. Glutamate 25 and aspartate 27 together coordinate Mg(2+). The active-site Nucleophile is histidine 41. Cystine bridges form between cysteine 45–cysteine 51 and cysteine 47–cysteine 191. Mg(2+) is bound at residue aspartate 85.

The protein belongs to the arthropod phospholipase D family. Class II subfamily. Class IIb sub-subfamily. It depends on Mg(2+) as a cofactor. In terms of tissue distribution, expressed by the venom gland.

Its subcellular location is the secreted. The catalysed reaction is an N-(acyl)-sphingosylphosphocholine = an N-(acyl)-sphingosyl-1,3-cyclic phosphate + choline. It catalyses the reaction N-hexanoyl-sphing-4-enine-1-phosphocholine = N-(hexanoyl)-sphing-4-enine-1,3-cyclic phosphate + choline. The enzyme catalyses an N-(acyl)-sphingosylphosphoethanolamine = an N-(acyl)-sphingosyl-1,3-cyclic phosphate + ethanolamine. It carries out the reaction N-dodecanoyl-heptadecasphing-4-enine-1-phosphoethanolamine = N-dodecanoyl-heptadecasphing-4-enine-1,3-cyclic phosphate + ethanolamine. The catalysed reaction is a 1-acyl-sn-glycero-3-phosphoethanolamine = a 1-acyl-sn-glycero-2,3-cyclic phosphate + ethanolamine. It catalyses the reaction 1-tetradecanoyl-sn-glycero-3-phosphoethanolamine = 1-tetradecanoyl-sn-glycero-2,3-cyclic phosphate + ethanolamine. Dermonecrotic toxins cleave the phosphodiester linkage between the phosphate and headgroup of certain phospholipids (sphingolipid and lysolipid substrates), forming an alcohol (often choline) and a cyclic phosphate. This toxin acts on lysophosphatidylethanolamine (LPE) and ceramide phosphoethanolamine (CPE) with high activity. This toxin acts on sphingomyelin (SM) with very low activity and is not active on lysophosphatidylserine (LPS), lysophosphatidylcholine (LPC) and lysophosphatidylglycerol (LPG). It acts by transphosphatidylation, releasing exclusively cyclic phosphate as second products. It is not surprising that spider toxins have affinity for ethanolamine-containing sphingolipids since they are common in insect prey. Induces dermonecrosis, hemolysis, increased vascular permeability, edema, inflammatory response, and platelet aggregation. This chain is Dermonecrotic toxin StSicTox-betaIC1, found in Sicarius terrosus (Cave spider).